The following is a 30-amino-acid chain: Unknown protein from spot 365 of 2D-PAGE of etiolated coleoptile (30 aa).

It belongs to the zinc-containing alcohol dehydrogenase family.

The polypeptide is Unknown protein from spot 365 of 2D-PAGE of etiolated coleoptile (Zea mays (Maize)).